A 470-amino-acid chain; its full sequence is Siroheme synthase (470 aa).

Residues 1-203 (MEFFPIFLKL…GDEAAARAEM (203 aa)) are precorrin-2 dehydrogenase /sirohydrochlorin ferrochelatase. NAD(+) contacts are provided by residues 22-23 (EV) and 43-44 (PE). Position 128 is a phosphoserine (serine 128). The interval 216–470 (GAVYLVGAGP…ENSAVTIQED (255 aa)) is uroporphyrinogen-III C-methyltransferase. Proline 225 contributes to the S-adenosyl-L-methionine binding site. Aspartate 248 (proton acceptor) is an active-site residue. Lysine 270 (proton donor) is an active-site residue. Residues 301-303 (GGD), methionine 383, and alanine 412 contribute to the S-adenosyl-L-methionine site.

This sequence in the N-terminal section; belongs to the precorrin-2 dehydrogenase / sirohydrochlorin ferrochelatase family. It in the C-terminal section; belongs to the precorrin methyltransferase family.

The enzyme catalyses uroporphyrinogen III + 2 S-adenosyl-L-methionine = precorrin-2 + 2 S-adenosyl-L-homocysteine + H(+). It carries out the reaction precorrin-2 + NAD(+) = sirohydrochlorin + NADH + 2 H(+). The catalysed reaction is siroheme + 2 H(+) = sirohydrochlorin + Fe(2+). It functions in the pathway cofactor biosynthesis; adenosylcobalamin biosynthesis; precorrin-2 from uroporphyrinogen III: step 1/1. It participates in cofactor biosynthesis; adenosylcobalamin biosynthesis; sirohydrochlorin from precorrin-2: step 1/1. Its pathway is porphyrin-containing compound metabolism; siroheme biosynthesis; precorrin-2 from uroporphyrinogen III: step 1/1. The protein operates within porphyrin-containing compound metabolism; siroheme biosynthesis; siroheme from sirohydrochlorin: step 1/1. It functions in the pathway porphyrin-containing compound metabolism; siroheme biosynthesis; sirohydrochlorin from precorrin-2: step 1/1. Functionally, multifunctional enzyme that catalyzes the SAM-dependent methylations of uroporphyrinogen III at position C-2 and C-7 to form precorrin-2 via precorrin-1. Then it catalyzes the NAD-dependent ring dehydrogenation of precorrin-2 to yield sirohydrochlorin. Finally, it catalyzes the ferrochelation of sirohydrochlorin to yield siroheme. This chain is Siroheme synthase, found in Chromobacterium violaceum (strain ATCC 12472 / DSM 30191 / JCM 1249 / CCUG 213 / NBRC 12614 / NCIMB 9131 / NCTC 9757 / MK).